We begin with the raw amino-acid sequence, 59 residues long: Large ribosomal subunit protein uL30 (59 aa).

This sequence belongs to the universal ribosomal protein uL30 family. Part of the 50S ribosomal subunit.

The polypeptide is Large ribosomal subunit protein uL30 (Solidesulfovibrio magneticus (strain ATCC 700980 / DSM 13731 / RS-1) (Desulfovibrio magneticus)).